The primary structure comprises 230 residues: Endonuclease NucS (230 aa).

It belongs to the NucS endonuclease family.

It is found in the cytoplasm. In terms of biological role, cleaves both 3' and 5' ssDNA extremities of branched DNA structures. The polypeptide is Endonuclease NucS (Corynebacterium aurimucosum (strain ATCC 700975 / DSM 44827 / CIP 107346 / CN-1) (Corynebacterium nigricans)).